Reading from the N-terminus, the 463-residue chain is Interferon-inducible GTPase 5 (463 aa).

The region spanning I53–D235 is the IRG-type G domain. Residues E62–S69, T87–E91, K169–D171, and S216–L218 each bind GTP. 2 positions are modified to phosphoserine: S247 and S304. Positions L404–P437 are disordered.

Belongs to the TRAFAC class dynamin-like GTPase superfamily. IRG family. Abundantly expressed in semen (at protein level).

It localises to the cell projection. Its subcellular location is the cilium. The protein localises to the flagellum. It is found in the lipid droplet. The catalysed reaction is GTP + H2O = GDP + phosphate + H(+). In terms of biological role, required for sperm motility and therefore male fertility, via positive regulation of spermatozoa fibrous sheath formation. This Homo sapiens (Human) protein is Interferon-inducible GTPase 5.